The primary structure comprises 916 residues: Protein translocase subunit SecA (916 aa).

ATP-binding positions include glutamine 87, 105–109, and aspartate 512; that span reads GEGKT. Residues 857–916 form a disordered region; sequence QHAEAPSMEQAVAGEEEELPEGPAPVVPLEPVRNEQKIGRNEPCPCGSGKKYKHCHGQLD. Residues cysteine 900, cysteine 902, cysteine 911, and histidine 912 each contribute to the Zn(2+) site. Over residues 906-916 the composition is skewed to basic residues; the sequence is KKYKHCHGQLD.

Belongs to the SecA family. As to quaternary structure, monomer and homodimer. Part of the essential Sec protein translocation apparatus which comprises SecA, SecYEG and auxiliary proteins SecDF-YajC and YidC. The cofactor is Zn(2+).

Its subcellular location is the cell inner membrane. It localises to the cytoplasm. The catalysed reaction is ATP + H2O + cellular proteinSide 1 = ADP + phosphate + cellular proteinSide 2.. In terms of biological role, part of the Sec protein translocase complex. Interacts with the SecYEG preprotein conducting channel. Has a central role in coupling the hydrolysis of ATP to the transfer of proteins into and across the cell membrane, serving both as a receptor for the preprotein-SecB complex and as an ATP-driven molecular motor driving the stepwise translocation of polypeptide chains across the membrane. The polypeptide is Protein translocase subunit SecA (Pseudomonas aeruginosa (strain UCBPP-PA14)).